The chain runs to 136 residues: Large ribosomal subunit protein uL16 (136 aa).

Belongs to the universal ribosomal protein uL16 family. In terms of assembly, part of the 50S ribosomal subunit.

In terms of biological role, binds 23S rRNA and is also seen to make contacts with the A and possibly P site tRNAs. The protein is Large ribosomal subunit protein uL16 of Rickettsia felis (strain ATCC VR-1525 / URRWXCal2) (Rickettsia azadi).